We begin with the raw amino-acid sequence, 1070 residues long: MIRDGNEEMSTIPGFSQIQFEGFCRFIDQGLMEELYKFPKIEDTDQEIEFQLFVETYQLAEPLIKERDAVYESLTYSSELYVPAGLIWKTSRNMQEQTIFIGNIPLMNSLGTSIVNGIYRIVINQILQSPGIYYRSELDHNGTSVYTGTIISDWGGRSELEIDRKARIWARVSRKQKISILVLSSAMGSNLREILDNVCYPEIFLSFPNDKEKKKIGSKENAILEFYQQFACVGGDPVFSESLCKELQKKFFQQRCELGRIGRRNMNRRLNLDIPQNNTFLLPRDILAAADRLIGIKFGMGTLDDMNHLKNKRIRSVADLLQDQFGLALVRLENAVRGTICGAIRHKLIPTPQNLVTSTPLTTTYESFFGLHPLSQVLDRTNPLTQIVHGRKSSYLGPGGLTGRTASFRIRDIHPSHYGRICPIDTSEGINVGLIGSLAIHARIGHWGSLESPFYEISERSKKVRMLYLSPSKDEYYMVAAGNSLSLNKGIQEEQVVPARYRQEFLTIAWEQVHLRSIFPFQYFSIGASLIPFIEHNDANRALMSSNMQRQAVPLSRSEKCIVGTGLERQAALDSGVSAIAEHEGKIIYTDIDKIILSGNGDTLRIPLVMYQRSNKNTCMHQKPQVQRGKCIKKGQILADGAATVGGELALGKNVLVAYMPWEGYNSEDAVLISECLVYRDIYTSFHIRKYEIQTHVTSQGPERITNEIPHLEAHLLRNLDKNGIVMLGSWVETGDILVGKLTPQTSKESSYAPEDRLLRAILGIQVSTSKETCLKLPIGGRGRVIDVRWIQKKGGSNYNPETIRVYISQKREIKVGDKVAGRHGNKGIISKILPRQDMPYLQNGTPVDMVFNPLGVPSRMNVGQIFECSLGLAGGLLDRHYRIAPFDERYEQEASRKLVFSELYEASKQTANPWVFEPEYPGKSRIFDGRTGDPFEQPVIIGKSYIMKLIHQVDDKIHGRSSGHYALVTQQPLRGRAKQGGQRVGEMEVWALEGFGVAHILQEMLTYKSDHIRARQEVLGTTIIGGTIPNPEDTPESFRLLVRELRSLALELNHFLVSEKNFQINRKAA.

This sequence belongs to the RNA polymerase beta chain family. In plastids the minimal PEP RNA polymerase catalytic core is composed of four subunits: alpha, beta, beta', and beta''. When a (nuclear-encoded) sigma factor is associated with the core the holoenzyme is formed, which can initiate transcription.

The protein localises to the plastid. It localises to the chloroplast. The catalysed reaction is RNA(n) + a ribonucleoside 5'-triphosphate = RNA(n+1) + diphosphate. DNA-dependent RNA polymerase catalyzes the transcription of DNA into RNA using the four ribonucleoside triphosphates as substrates. In Buxus microphylla (Littleleaf boxwood), this protein is DNA-directed RNA polymerase subunit beta.